A 760-amino-acid polypeptide reads, in one-letter code: Xaa-Pro dipeptidyl-peptidase (760 aa).

Catalysis depends on charge relay system residues Ser-349, Asp-469, and His-499.

Belongs to the peptidase S15 family. In terms of assembly, homodimer.

The protein localises to the cytoplasm. The enzyme catalyses Hydrolyzes Xaa-Pro-|- bonds to release unblocked, N-terminal dipeptides from substrates including Ala-Pro-|-p-nitroanilide and (sequentially) Tyr-Pro-|-Phe-Pro-|-Gly-Pro-|-Ile.. In terms of biological role, removes N-terminal dipeptides sequentially from polypeptides having unsubstituted N-termini provided that the penultimate residue is proline. The sequence is that of Xaa-Pro dipeptidyl-peptidase from Streptococcus pyogenes serotype M1.